A 419-amino-acid chain; its full sequence is Pyrrolysine--tRNA ligase (419 aa).

The tract at residues 100 to 157 is disordered; that stretch reads APKVKKAMPKSVSRAPKPLENSVSAKASTNTSRSVPSPAKSTPNSSVPASAPAPSLTR. Polar residues predominate over residues 120–141; that stretch reads NSVSAKASTNTSRSVPSPAKST. Residues 142–154 are compositionally biased toward low complexity; sequence PNSSVPASAPAPS.

This sequence belongs to the class-II aminoacyl-tRNA synthetase family.

The protein resides in the cytoplasm. It catalyses the reaction tRNA(Pyl) + L-pyrrolysine + ATP = L-pyrrolysyl-tRNA(Pyl) + AMP + diphosphate. In terms of biological role, catalyzes the attachment of pyrrolysine to tRNA(Pyl). Pyrrolysine is a lysine derivative encoded by the termination codon UAG. The protein is Pyrrolysine--tRNA ligase (pylS) of Methanosarcina barkeri.